Reading from the N-terminus, the 301-residue chain is Polyamine aminopropyltransferase (301 aa).

A PABS domain is found at 4–240 (WHWLLEWQTP…GLWGFVYGGV (237 aa)). Glutamine 33 lines the S-methyl-5'-thioadenosine pocket. The spermidine site is built by histidine 64 and glutamate 89. S-methyl-5'-thioadenosine-binding positions include aspartate 109 and 141-142 (DG). Aspartate 159 functions as the Proton acceptor in the catalytic mechanism.

This sequence belongs to the spermidine/spermine synthase family. As to quaternary structure, homotrimer.

The protein resides in the cytoplasm. It carries out the reaction S-adenosyl 3-(methylsulfanyl)propylamine + putrescine = S-methyl-5'-thioadenosine + spermidine + H(+). It catalyses the reaction S-adenosyl 3-(methylsulfanyl)propylamine + propane-1,3-diamine = norspermidine + S-methyl-5'-thioadenosine + H(+). The catalysed reaction is norspermidine + S-adenosyl 3-(methylsulfanyl)propylamine = norspermine + S-methyl-5'-thioadenosine + H(+). The enzyme catalyses S-adenosyl 3-(methylsulfanyl)propylamine + spermidine = thermospermine + S-methyl-5'-thioadenosine + H(+). Its pathway is amine and polyamine biosynthesis; spermidine biosynthesis; spermidine from putrescine: step 1/1. Competitively inhibited by 5-methylthioadenosine, 5-methylthiotubercidin, S-adenosyl(5)-3-thiopropylamine and S-adenosyl-3-thio-l,8-diaminooctane. In terms of biological role, involved in the biosynthesis of polyamines which are thought to support the growth of thermophilic microorganisms under high-temperature conditions. It seems that long-chain and branched-chain of polyamines effectively stabilize DNA and RNA, respectively. Catalyzes the irreversible transfer of a propylamine group from the amino donor S-adenosylmethioninamine (decarboxy-AdoMet) to various amine acceptors such as putrescine (1,4-diaminobutane), 1,3-diaminopropane, sym-norspermidine and spermidine. The biosynthesis of caldopentamine from norspermine has been also observed, but with a very low activity. The reaction involves a nucleophilic attack on the C-3 methylene of the propylamine moiety adjacent to the positively charged sulfur of decarboxy-AdoMet. S-adenosylmethioninamine is the only amino donor. The chain is Polyamine aminopropyltransferase from Saccharolobus solfataricus (strain ATCC 35092 / DSM 1617 / JCM 11322 / P2) (Sulfolobus solfataricus).